The sequence spans 414 residues: Arrestin domain-containing protein 3 (414 aa).

2 short sequence motifs (PPxY motif) span residues P346–Y349 and P391–Y394. Residues L393 to R414 are disordered. The segment covering S405–R414 has biased composition (basic and acidic residues).

This sequence belongs to the arrestin family. As to quaternary structure, interacts (via PPxY motifs) with NEDD4 (via WW domains). Interacts with ADRB2. Interacts with ADRB3. Interacts with HGS (via PPxY motifs). Does not bind TXN (thioredoxin). Interacts with ITCH.

Its subcellular location is the cytoplasm. It localises to the cell membrane. The protein localises to the lysosome. The protein resides in the endosome. It is found in the early endosome. Functionally, adapter protein that plays a role in regulating cell-surface expression of adrenergic receptors and probably also other G protein-coupled receptors. Plays a role in NEDD4-mediated ubiquitination and endocytosis af activated ADRB2 and subsequent ADRB2 degradation. May recruit NEDD4 to ADRB2. Alternatively, may function as adapter protein that does not play a major role in recruiting NEDD4 to ADRB2, but rather plays a role in a targeting ADRB2 to endosomes. The polypeptide is Arrestin domain-containing protein 3 (Arrdc3) (Rattus norvegicus (Rat)).